A 312-amino-acid chain; its full sequence is Pantothenate kinase (312 aa).

97–104 contributes to the ATP binding site; sequence GSVAVGKS.

It belongs to the prokaryotic pantothenate kinase family.

The protein resides in the cytoplasm. It carries out the reaction (R)-pantothenate + ATP = (R)-4'-phosphopantothenate + ADP + H(+). Its pathway is cofactor biosynthesis; coenzyme A biosynthesis; CoA from (R)-pantothenate: step 1/5. The polypeptide is Pantothenate kinase (Mycolicibacterium smegmatis (strain ATCC 700084 / mc(2)155) (Mycobacterium smegmatis)).